The following is a 55-amino-acid chain: Transcriptional regulator CdrS (55 aa).

It belongs to the CdrS family.

Its subcellular location is the cytoplasm. Transcriptional regulator which plays a central role in the regulation of cell division. Activates the expression of the gene encoding the cell division protein FtsZ2, and of other genes encoding proteins predicted to function in critical aspects of cell division. Required for normal cell division but not for cell elongation. May act during the transition from stasis to growth. The CdrSL-FtsZ2 transcriptional network might coordinate cell division timing with cell growth. This is Transcriptional regulator CdrS from Halobacterium salinarum (strain ATCC 700922 / JCM 11081 / NRC-1) (Halobacterium halobium).